Here is a 102-residue protein sequence, read N- to C-terminus: Protein Tat (102 aa).

The segment covering 1 to 10 (MEPVDPRLEP) has biased composition (basic and acidic residues). Residues 1–20 (MEPVDPRLEPWNHPGSQPKT) form a disordered region. The interaction with human CREBBP stretch occupies residues 1 to 24 (MEPVDPRLEPWNHPGSQPKTACNK). The tract at residues 1–48 (MEPVDPRLEPWNHPGSQPKTACNKCYCKKCCYHCMCCFTKKGLGISYG) is transactivation. Residues Cys22, Cys25, and Cys27 each contribute to the Zn(2+) site. The interval 22–37 (CNKCYCKKCCYHCMCC) is cysteine-rich. N6-acetyllysine; by host PCAF is present on Lys28. Zn(2+)-binding residues include Cys30, His33, Cys34, and Cys37. The tract at residues 38–48 (FTKKGLGISYG) is core. The tract at residues 47-102 (YGRKKRSQRRRPPKSSKDHQDPIPEQPLSRQQPGDQTGQKKQKKALEGKTEADPCD) is disordered. Residues 48–60 (GRKKRSQRRRPPK) are compositionally biased toward basic residues. The Nuclear localization signal, RNA-binding (TAR), and protein transduction motif lies at 49-57 (RKKRSQRRR). Residues 49–87 (RKKRSQRRRPPKSSKDHQDPIPEQPLSRQQPGDQTGQKK) are interaction with the host capping enzyme RNGTT. 2 positions are modified to N6-acetyllysine; by host EP300 and GCN5L2: Lys50 and Lys51. At Arg52 the chain carries Asymmetric dimethylarginine; by host PRMT6. Over residues 74-85 (LSRQQPGDQTGQ) the composition is skewed to polar residues. Positions 90-102 (KALEGKTEADPCD) are enriched in basic and acidic residues.

It belongs to the lentiviruses Tat family. Interacts with host CCNT1. Associates with the P-TEFb complex composed at least of Tat, P-TEFb (CDK9 and CCNT1), TAR RNA, RNA Pol II. Recruits the HATs CREBBP, TAF1/TFIID, EP300, PCAF and GCN5L2. Interacts with host KAT5/Tip60; this interaction targets the latter to degradation. Interacts with the host deacetylase SIRT1. Interacts with host capping enzyme RNGTT; this interaction stimulates RNGTT. Binds to host KDR, and to the host integrins ITGAV/ITGB3 and ITGA5/ITGB1. Interacts with host KPNB1/importin beta-1 without previous binding to KPNA1/importin alpha-1. Interacts with EIF2AK2. Interacts with host nucleosome assembly protein NAP1L1; this interaction may be required for the transport of Tat within the nucleus, since the two proteins interact at the nuclear rim. Interacts with host C1QBP/SF2P32; this interaction involves lysine-acetylated Tat. Interacts with the host chemokine receptors CCR2, CCR3 and CXCR4. Interacts with host DPP4/CD26; this interaction may trigger an anti-proliferative effect. Interacts with host LDLR. Interacts with the host extracellular matrix metalloproteinase MMP1. Interacts with host PRMT6; this interaction mediates Tat's methylation. Interacts with, and is ubiquitinated by MDM2/Hdm2. Interacts with host PSMC3 and HTATIP2. Interacts with STAB1; this interaction may overcome SATB1-mediated repression of IL2 and IL2RA (interleukin) in T cells by binding to the same domain than HDAC1. Interacts (when acetylated) with human CDK13, thereby increasing HIV-1 mRNA splicing and promoting the production of the doubly spliced HIV-1 protein Nef. Interacts with host TBP; this interaction modulates the activity of transcriptional pre-initiation complex. Interacts with host RELA. Interacts with host PLSCR1; this interaction negatively regulates Tat transactivation activity by altering its subcellular distribution. In terms of processing, asymmetrical arginine methylation by host PRMT6 seems to diminish the transactivation capacity of Tat and affects the interaction with host CCNT1. Post-translationally, acetylation by EP300, CREBBP, GCN5L2/GCN5 and PCAF regulates the transactivation activity of Tat. EP300-mediated acetylation of Lys-50 promotes dissociation of Tat from the TAR RNA through the competitive binding to PCAF's bromodomain. In addition, the non-acetylated Tat's N-terminus can also interact with PCAF. PCAF-mediated acetylation of Lys-28 enhances Tat's binding to CCNT1. Lys-50 is deacetylated by SIRT1. Polyubiquitination by host MDM2 does not target Tat to degradation, but activates its transactivation function and fosters interaction with CCNT1 and TAR RNA. In terms of processing, phosphorylated by EIF2AK2 on serine and threonine residues adjacent to the basic region important for TAR RNA binding and function. Phosphorylation of Tat by EIF2AK2 is dependent on the prior activation of EIF2AK2 by dsRNA.

The protein resides in the host nucleus. It is found in the host nucleolus. Its subcellular location is the host cytoplasm. The protein localises to the secreted. In terms of biological role, transcriptional activator that increases RNA Pol II processivity, thereby increasing the level of full-length viral transcripts. Recognizes a hairpin structure at the 5'-LTR of the nascent viral mRNAs referred to as the transactivation responsive RNA element (TAR) and recruits the cyclin T1-CDK9 complex (P-TEFb complex) that will in turn hyperphosphorylate the RNA polymerase II to allow efficient elongation. The CDK9 component of P-TEFb and other Tat-activated kinases hyperphosphorylate the C-terminus of RNA Pol II that becomes stabilized and much more processive. Other factors such as HTATSF1/Tat-SF1, SUPT5H/SPT5, and HTATIP2 are also important for Tat's function. Besides its effect on RNA Pol II processivity, Tat induces chromatin remodeling of proviral genes by recruiting the histone acetyltransferases (HATs) CREBBP, EP300 and PCAF to the chromatin. This also contributes to the increase in proviral transcription rate, especially when the provirus integrates in transcriptionally silent region of the host genome. To ensure maximal activation of the LTR, Tat mediates nuclear translocation of NF-kappa-B by interacting with host RELA. Through its interaction with host TBP, Tat may also modulate transcription initiation. Tat can reactivate a latently infected cell by penetrating in it and transactivating its LTR promoter. In the cytoplasm, Tat is thought to act as a translational activator of HIV-1 mRNAs. Functionally, extracellular circulating Tat can be endocytosed by surrounding uninfected cells via the binding to several surface receptors such as CD26, CXCR4, heparan sulfate proteoglycans (HSPG) or LDLR. Neurons are rarely infected, but they internalize Tat via their LDLR. Through its interaction with nuclear HATs, Tat is potentially able to control the acetylation-dependent cellular gene expression. Modulates the expression of many cellular genes involved in cell survival, proliferation or in coding for cytokines or cytokine receptors. Tat plays a role in T-cell and neurons apoptosis. Tat induced neurotoxicity and apoptosis probably contribute to neuroAIDS. Circulating Tat also acts as a chemokine-like and/or growth factor-like molecule that binds to specific receptors on the surface of the cells, affecting many cellular pathways. In the vascular system, Tat binds to ITGAV/ITGB3 and ITGA5/ITGB1 integrins dimers at the surface of endothelial cells and competes with bFGF for heparin-binding sites, leading to an excess of soluble bFGF. The polypeptide is Protein Tat (Human immunodeficiency virus type 1 group N (isolate YBF106) (HIV-1)).